The sequence spans 603 residues: DNA mismatch repair protein MutL (603 aa).

The segment covering isoleucine 337 to serine 347 has biased composition (basic and acidic residues). Residues isoleucine 337–proline 383 form a disordered region.

It belongs to the DNA mismatch repair MutL/HexB family.

Functionally, this protein is involved in the repair of mismatches in DNA. It is required for dam-dependent methyl-directed DNA mismatch repair. May act as a 'molecular matchmaker', a protein that promotes the formation of a stable complex between two or more DNA-binding proteins in an ATP-dependent manner without itself being part of a final effector complex. This chain is DNA mismatch repair protein MutL, found in Listeria monocytogenes serotype 4b (strain F2365).